The sequence spans 251 residues: Ubiquinone/menaquinone biosynthesis C-methyltransferase UbiE (251 aa).

S-adenosyl-L-methionine is bound by residues threonine 74, aspartate 95, 123 to 124 (NA), and serine 140.

The protein belongs to the class I-like SAM-binding methyltransferase superfamily. MenG/UbiE family.

It carries out the reaction a 2-demethylmenaquinol + S-adenosyl-L-methionine = a menaquinol + S-adenosyl-L-homocysteine + H(+). The enzyme catalyses a 2-methoxy-6-(all-trans-polyprenyl)benzene-1,4-diol + S-adenosyl-L-methionine = a 5-methoxy-2-methyl-3-(all-trans-polyprenyl)benzene-1,4-diol + S-adenosyl-L-homocysteine + H(+). Its pathway is quinol/quinone metabolism; menaquinone biosynthesis; menaquinol from 1,4-dihydroxy-2-naphthoate: step 2/2. The protein operates within cofactor biosynthesis; ubiquinone biosynthesis. Functionally, methyltransferase required for the conversion of demethylmenaquinol (DMKH2) to menaquinol (MKH2) and the conversion of 2-polyprenyl-6-methoxy-1,4-benzoquinol (DDMQH2) to 2-polyprenyl-3-methyl-6-methoxy-1,4-benzoquinol (DMQH2). This is Ubiquinone/menaquinone biosynthesis C-methyltransferase UbiE from Escherichia coli O1:K1 / APEC.